A 547-amino-acid polypeptide reads, in one-letter code: Elongator complex protein 3 (547 aa).

The Radical SAM core domain occupies 82–372 (RTASGIAVVA…YRVQRDIPMP (291 aa)). [4Fe-4S] cluster is bound by residues Cys-99, Cys-109, and Cys-112. Phosphoserine is present on Ser-161. Lys-164 provides a ligand contact to acetyl-CoA. An N6-methyllysine modification is found at Lys-229. Tyr-251 is subject to Phosphotyrosine. The N-acetyltransferase domain maps to 396-547 (IQCRDVRTRE…QGPYMVKMLK (152 aa)). Residues 474–477 (ELHV), 497–499 (FGM), and Tyr-530 each bind acetyl-CoA.

It belongs to the ELP3 family. In terms of assembly, component of the elongator complex which consists of ELP1, ELP2, ELP3, ELP4, ELP5 and ELP6. ELP1, ELP2 and ELP3 form the elongator core complex. Interacts with alpha-tubulin. The cofactor is [4Fe-4S] cluster. Post-translationally, tyrosine-phosphorylated. Also serine/threonine-phosphorylated.

It is found in the cytoplasm. The protein localises to the nucleus. The catalysed reaction is uridine(34) in tRNA + acetyl-CoA + S-adenosyl-L-methionine + H2O = 5-(carboxymethyl)uridine(34) in tRNA + 5'-deoxyadenosine + L-methionine + CoA + 2 H(+). It participates in tRNA modification; 5-methoxycarbonylmethyl-2-thiouridine-tRNA biosynthesis. Its function is as follows. Catalytic tRNA acetyltransferase subunit of the elongator complex which is required for multiple tRNA modifications, including mcm5U (5-methoxycarbonylmethyl uridine), mcm5s2U (5-methoxycarbonylmethyl-2-thiouridine), and ncm5U (5-carbamoylmethyl uridine). In the elongator complex, acts as a tRNA uridine(34) acetyltransferase by mediating formation of carboxymethyluridine in the wobble base at position 34 in tRNAs. May also act as a protein lysine acetyltransferase by mediating acetylation of target proteins; such activity is however unclear in vivo and recent evidences suggest that ELP3 primarily acts as a tRNA acetyltransferase. Involved in neurogenesis: regulates the migration and branching of projection neurons in the developing cerebral cortex, through a process depending on alpha-tubulin acetylation. Required for acetylation of GJA1 in the developing cerebral cortex. The polypeptide is Elongator complex protein 3 (Mus musculus (Mouse)).